The chain runs to 221 residues: MVTPEDLECLKRIALMGGLNTPVFLKTISLGSELGFSPQTASRRLRSLEQQGFISRTLGTDGQQVTITHGGEDALRQEYCDYYRLFGRQEKSLMLNGTVQSGLGEGAYYMSLQPYADQFQRILGFTPFPGTLNIRLLPGATLQRKRLSSAEWKVVQGFESEGRTFGDVRCLPCFIRDVPCGIIIPGRTHYPEELIEVVSPEGLRKRFSLKDGDEVTIEVTL.

The segment at 1–92 is H-T-H motif-like; that stretch reads MVTPEDLECL…YRLFGRQEKS (92 aa). Positions 93–221 are riboflavin kinase; the sequence is LMLNGTVQSG…GDEVTIEVTL (129 aa). Position 102–107 (102–107) interacts with CDP; sequence GLGEGA. 2 residues coordinate Mg(2+): Thr131 and Asn133. Positions 188 and 196 each coordinate FMN. Residue 201 to 204 coordinates CDP; it reads EGLR.

The protein belongs to the archaeal riboflavin kinase family. The cofactor is Mg(2+).

The catalysed reaction is riboflavin + CTP = CDP + FMN + H(+). It participates in cofactor biosynthesis; FMN biosynthesis; FMN from riboflavin (CTP route): step 1/1. In terms of biological role, catalyzes the CTP-dependent phosphorylation of riboflavin (vitamin B2) to form flavin mononucleotide (FMN). In Methanospirillum hungatei JF-1 (strain ATCC 27890 / DSM 864 / NBRC 100397 / JF-1), this protein is Riboflavin kinase (ribK).